A 123-amino-acid chain; its full sequence is Venom peptide MmKTx1 (123 aa).

Residues 1–21 (MSIKISAIALFMLSFTVFVNG) form the signal peptide.

Belongs to the scorpion La1-like peptide family. Post-translationally, contains 4 disulfide bonds. In terms of tissue distribution, expressed by the venom gland.

It localises to the secreted. The protein is Venom peptide MmKTx1 of Olivierus martensii (Manchurian scorpion).